A 381-amino-acid chain; its full sequence is Neuropeptide Y receptor type 2 (381 aa).

A disordered region spans residues 1 to 35 (MGPIGTEADENQTVEEMKVEQYGPQTTPRGELVPD). The Extracellular segment spans residues 1-51 (MGPIGTEADENQTVEEMKVEQYGPQTTPRGELVPDPEPELIDSTKLIEVQV). N-linked (GlcNAc...) asparagine glycosylation is present at Asn-11. Residues 52 to 72 (VLILAYCSIILLGVIGNSLVI) traverse the membrane as a helical segment. At 73 to 86 (HVVIKFKSMRTVTN) the chain is on the cytoplasmic side. Residues 87-107 (FFIANLAVADLVVNTLCLPFT) form a helical membrane-spanning segment. Residues 108–124 (LTYTLMGEWKMGPVLCH) are Extracellular-facing. Cys-123 and Cys-203 are joined by a disulfide. A helical transmembrane segment spans residues 125–145 (LVPYAQGLAVQVSTITLTVIA). Topologically, residues 146–165 (LDRHRCIVYHLESKISKRIS) are cytoplasmic. The chain crosses the membrane as a helical span at residues 166–186 (FLIIGLAWGISALLASPLAIF). The Extracellular portion of the chain corresponds to 187 to 216 (REYSLIEIIPDFEIVACTEKWPGEEKSIYG). The helical transmembrane segment at 217 to 237 (TVYSLSSLLILYVLPLGIISF) threads the bilayer. Residues 238 to 268 (SYTRIWSKLKSHVSPGAANDHYHQRRQKTTK) are Cytoplasmic-facing. A helical membrane pass occupies residues 269 to 289 (MLVCVVVVFAVSWLPLHAFQL). The Extracellular segment spans residues 290–304 (AVDIDSHVLDLKEYK). Residues 305–325 (LIFTVFHIIAMCSTFANPLLY) traverse the membrane as a helical segment. The Cytoplasmic portion of the chain corresponds to 326–381 (GWMNSNYRKAFLSAFRCEQRLDAIHSEVSVTFKAKKNLEVRKNSGPNDSFTEATNV). Cys-342 is lipidated: S-palmitoyl cysteine.

It belongs to the G-protein coupled receptor 1 family.

It localises to the cell membrane. Receptor for neuropeptide Y and peptide YY. The sequence is that of Neuropeptide Y receptor type 2 (NPY2R) from Macaca mulatta (Rhesus macaque).